Here is a 485-residue protein sequence, read N- to C-terminus: uncharacterized protein (485 aa).

Residues 1–30 are Cytoplasmic-facing; it reads MFSWANIGSNEYLPLKNDRKAYLNQWAKRS. The chain crosses the membrane as a helical span at residues 31–51; sequence GLAIAAICILGILILAIVKLF. Over 52-485 the chain is Extracellular; that stretch reads CFKAIIFPIV…DIEQAYSKLI (434 aa). A glycan (N-linked (GlcNAc...) asparagine) is linked at asparagine 67. The phosphodiesterase stretch occupies residues 74 to 404; that stretch reads STVIVISLDG…YEPLGVHGYD (331 aa). The Nucleophile role is filled by threonine 118. Residues asparagine 306, asparagine 338, asparagine 453, and asparagine 467 are each glycosylated (N-linked (GlcNAc...) asparagine).

The protein belongs to the nucleotide pyrophosphatase/phosphodiesterase family.

It is found in the membrane. This is an uncharacterized protein from Schizosaccharomyces pombe (strain 972 / ATCC 24843) (Fission yeast).